Consider the following 309-residue polypeptide: Uricase-2 isozyme 1 (309 aa).

Catalysis depends on charge relay system residues Lys-18 and Thr-64. Residues Thr-64, Asp-65, Phe-166, Arg-183, Val-238, Gln-239, and Asn-265 each coordinate urate. The Charge relay system role is filled by His-267. The Microbody targeting signal signature appears at 307-309 (SKL).

Belongs to the uricase family. Homotetramer. Post-translationally, the N-terminus is blocked. In terms of tissue distribution, expressed predominantly in the uninfected cells of the central tissue of the root nodule.

It localises to the peroxisome. It carries out the reaction urate + O2 + H2O = 5-hydroxyisourate + H2O2. Its pathway is purine metabolism; urate degradation; (S)-allantoin from urate: step 1/3. Catalyzes the oxidation of uric acid to 5-hydroxyisourate, which is further processed to form (S)-allantoin. The chain is Uricase-2 isozyme 1 from Glycine max (Soybean).